The chain runs to 456 residues: Adenylosuccinate synthetase isozyme 1 (456 aa).

The disordered stretch occupies residues M1–N30. Residues G41–K47 and G69–T71 contribute to the GTP site. D42 serves as the catalytic Proton acceptor. Positions 42 and 69 each coordinate Mg(2+). D42 lines the substrate pocket. Residues D42–K45 and N67–H70 contribute to the IMP site. Residue H70 is the Proton donor of the active site. Position 130 is a phosphoserine (S130). 5 residues coordinate IMP: T162, R176, N255, T270, and R334. V330–R336 is a binding site for substrate. Residues R336, K362–D364, and G444–K447 contribute to the GTP site.

It belongs to the adenylosuccinate synthetase family. Homodimer. Mg(2+) serves as cofactor.

It localises to the cytoplasm. The enzyme catalyses IMP + L-aspartate + GTP = N(6)-(1,2-dicarboxyethyl)-AMP + GDP + phosphate + 2 H(+). Its pathway is purine metabolism; AMP biosynthesis via de novo pathway; AMP from IMP: step 1/2. Its function is as follows. Component of the purine nucleotide cycle (PNC), which interconverts IMP and AMP to regulate the nucleotide levels in various tissues, and which contributes to glycolysis and ammoniagenesis. Catalyzes the first committed step in the biosynthesis of AMP from IMP. In Danio rerio (Zebrafish), this protein is Adenylosuccinate synthetase isozyme 1 (adss1).